A 140-amino-acid polypeptide reads, in one-letter code: Large ribosomal subunit protein uL16 (140 aa).

This sequence belongs to the universal ribosomal protein uL16 family. In terms of assembly, part of the 50S ribosomal subunit.

Its function is as follows. Binds 23S rRNA and is also seen to make contacts with the A and possibly P site tRNAs. The chain is Large ribosomal subunit protein uL16 from Citrifermentans bemidjiense (strain ATCC BAA-1014 / DSM 16622 / JCM 12645 / Bem) (Geobacter bemidjiensis).